The following is a 237-amino-acid chain: Concanavalin-A (237 aa).

The Mn(2+) site is built by Glu8 and Asp10. Ca(2+)-binding residues include Asp10, Tyr12, Asn14, and Asp19. Tyr12 contacts a carbohydrate. Mn(2+) is bound by residues Asp19 and His24. Residue 99-100 participates in a carbohydrate binding; the sequence is LY. Asp208 contributes to the Ca(2+) binding site. A carbohydrate is bound at residue Arg228.

The protein belongs to the leguminous lectin family. Homotetramer.

Glucose/D-mannose specific lectin. This is Concanavalin-A from Canavalia lineata (Beach bean).